The sequence spans 93 residues: Auxin-responsive protein SAUR26 (93 aa).

The protein belongs to the ARG7 family. In terms of assembly, interacts with PP2C-D1. Higher expression in thermo-responsive cultivars (e.g. cv. Alst-1, cv. Ang-0 and cv. Com-0) than in low thermo-responsive cultivars (e.g. cv. Dja-1, cv. El-0 and cv. Kon).

Its subcellular location is the cell membrane. Functionally, provide a mechanistic link between auxin and plasma membrane H(+)-ATPases (PM H(+)-ATPases, e.g. AHA1 and AHA2), and triggers PM H(+)-ATPases activity by promoting phosphorylation of their C-terminal autoinhibitory domain as a result of PP2C-D subfamily of type 2C phosphatases inhibition, thus leading to the acidification of the apoplast and the facilitation of solutes and water uptake to drive cell expansion. Functions as a positive effectors of cell expansion through modulation of auxin transport. Involved in thermo-responsiveness of plant architecture. Enhances plasma membrane H(+)-ATPase. Probably involved in light intensity mediated root development. The polypeptide is Auxin-responsive protein SAUR26 (Arabidopsis thaliana (Mouse-ear cress)).